The following is a 321-amino-acid chain: Lipoyl synthase (321 aa).

Residues Cys-68, Cys-73, Cys-79, Cys-94, Cys-98, Cys-101, and Ser-308 each coordinate [4Fe-4S] cluster. The 218-residue stretch at 80-297 folds into the Radical SAM core domain; that stretch reads FNHGTATFMI…KAEAMAMGFT (218 aa).

It belongs to the radical SAM superfamily. Lipoyl synthase family. [4Fe-4S] cluster serves as cofactor.

Its subcellular location is the cytoplasm. The catalysed reaction is [[Fe-S] cluster scaffold protein carrying a second [4Fe-4S](2+) cluster] + N(6)-octanoyl-L-lysyl-[protein] + 2 oxidized [2Fe-2S]-[ferredoxin] + 2 S-adenosyl-L-methionine + 4 H(+) = [[Fe-S] cluster scaffold protein] + N(6)-[(R)-dihydrolipoyl]-L-lysyl-[protein] + 4 Fe(3+) + 2 hydrogen sulfide + 2 5'-deoxyadenosine + 2 L-methionine + 2 reduced [2Fe-2S]-[ferredoxin]. Its pathway is protein modification; protein lipoylation via endogenous pathway; protein N(6)-(lipoyl)lysine from octanoyl-[acyl-carrier-protein]: step 2/2. Its function is as follows. Catalyzes the radical-mediated insertion of two sulfur atoms into the C-6 and C-8 positions of the octanoyl moiety bound to the lipoyl domains of lipoate-dependent enzymes, thereby converting the octanoylated domains into lipoylated derivatives. This Cronobacter sakazakii (strain ATCC BAA-894) (Enterobacter sakazakii) protein is Lipoyl synthase.